The chain runs to 215 residues: Imidazole glycerol phosphate synthase subunit HisH (215 aa).

Residues 3–215 (TAVVFDYGFG…QLLKNWIATL (213 aa)) form the Glutamine amidotransferase type-1 domain. C81 functions as the Nucleophile in the catalytic mechanism. Catalysis depends on residues H196 and E198.

Heterodimer of HisH and HisF.

It is found in the cytoplasm. It carries out the reaction 5-[(5-phospho-1-deoxy-D-ribulos-1-ylimino)methylamino]-1-(5-phospho-beta-D-ribosyl)imidazole-4-carboxamide + L-glutamine = D-erythro-1-(imidazol-4-yl)glycerol 3-phosphate + 5-amino-1-(5-phospho-beta-D-ribosyl)imidazole-4-carboxamide + L-glutamate + H(+). It catalyses the reaction L-glutamine + H2O = L-glutamate + NH4(+). Its pathway is amino-acid biosynthesis; L-histidine biosynthesis; L-histidine from 5-phospho-alpha-D-ribose 1-diphosphate: step 5/9. Its function is as follows. IGPS catalyzes the conversion of PRFAR and glutamine to IGP, AICAR and glutamate. The HisH subunit catalyzes the hydrolysis of glutamine to glutamate and ammonia as part of the synthesis of IGP and AICAR. The resulting ammonia molecule is channeled to the active site of HisF. This Bifidobacterium longum (strain NCC 2705) protein is Imidazole glycerol phosphate synthase subunit HisH.